Here is a 207-residue protein sequence, read N- to C-terminus: dTTP/UTP pyrophosphatase (207 aa).

Residue Asp-87 is the Proton acceptor of the active site.

It belongs to the Maf family. YhdE subfamily. The cofactor is a divalent metal cation.

Its subcellular location is the cytoplasm. It carries out the reaction dTTP + H2O = dTMP + diphosphate + H(+). It catalyses the reaction UTP + H2O = UMP + diphosphate + H(+). In terms of biological role, nucleoside triphosphate pyrophosphatase that hydrolyzes dTTP and UTP. May have a dual role in cell division arrest and in preventing the incorporation of modified nucleotides into cellular nucleic acids. This is dTTP/UTP pyrophosphatase from Ralstonia nicotianae (strain ATCC BAA-1114 / GMI1000) (Ralstonia solanacearum).